Consider the following 198-residue polypeptide: Peptidyl-tRNA hydrolase (198 aa).

A tRNA-binding site is contributed by Tyr16. The active-site Proton acceptor is His21. Residues Tyr67, Asn69, and Asn115 each coordinate tRNA.

Belongs to the PTH family. Monomer.

It is found in the cytoplasm. The enzyme catalyses an N-acyl-L-alpha-aminoacyl-tRNA + H2O = an N-acyl-L-amino acid + a tRNA + H(+). Its function is as follows. Hydrolyzes ribosome-free peptidyl-tRNAs (with 1 or more amino acids incorporated), which drop off the ribosome during protein synthesis, or as a result of ribosome stalling. Catalyzes the release of premature peptidyl moieties from peptidyl-tRNA molecules trapped in stalled 50S ribosomal subunits, and thus maintains levels of free tRNAs and 50S ribosomes. The sequence is that of Peptidyl-tRNA hydrolase from Gloeobacter violaceus (strain ATCC 29082 / PCC 7421).